Reading from the N-terminus, the 498-residue chain is tRNA-guanine(15) transglycosylase (498 aa).

The active-site Nucleophile is aspartate 85. A substrate-binding site is contributed by aspartate 120. Zn(2+) is bound by residues cysteine 275, cysteine 277, and cysteine 280.

Belongs to the archaeosine tRNA-ribosyltransferase family. Zn(2+) is required as a cofactor.

The enzyme catalyses guanosine(15) in tRNA + 7-cyano-7-deazaguanine = 7-cyano-7-carbaguanosine(15) in tRNA + guanine. It participates in tRNA modification; archaeosine-tRNA biosynthesis. Functionally, exchanges the guanine residue with 7-cyano-7-deazaguanine (preQ0) at position 15 in the dihydrouridine loop (D-loop) of archaeal tRNAs. The sequence is that of tRNA-guanine(15) transglycosylase from Sulfolobus acidocaldarius (strain ATCC 33909 / DSM 639 / JCM 8929 / NBRC 15157 / NCIMB 11770).